The sequence spans 473 residues: Catalase easC (473 aa).

Residues 1–15 (MASEVSVASSGSEHS) show a composition bias toward low complexity. The tract at residues 1 to 31 (MASEVSVASSGSEHSGAQKCPFQDPGLSSMD) is disordered. His-54 is a catalytic residue. Tyr-344 is a heme binding site. The segment at 352-389 (LGPNNLDLPANRTKKLADGSRPEKAEMAPQKVPSQEHA) is disordered. The segment covering 366-377 (KLADGSRPEKAE) has biased composition (basic and acidic residues).

This sequence belongs to the catalase family. It depends on heme as a cofactor.

Its pathway is alkaloid biosynthesis; ergot alkaloid biosynthesis. Catalase; part of the gene cluster that mediates the biosynthesis of fungal ergot alkaloid. DmaW catalyzes the first step of ergot alkaloid biosynthesis by condensing dimethylallyl diphosphate (DMAP) and tryptophan to form 4-dimethylallyl-L-tryptophan. The second step is catalyzed by the methyltransferase easF that methylates 4-dimethylallyl-L-tryptophan in the presence of S-adenosyl-L-methionine, resulting in the formation of 4-dimethylallyl-L-abrine. The catalase easC and the FAD-dependent oxidoreductase easE then transform 4-dimethylallyl-L-abrine to chanoclavine-I which is further oxidized by easD in the presence of NAD(+), resulting in the formation of chanoclavine-I aldehyde. Agroclavine dehydrogenase easG then mediates the conversion of chanoclavine-I aldehyde to agroclavine via a non-enzymatic adduct reaction: the substrate is an iminium intermediate that is formed spontaneously from chanoclavine-I aldehyde in the presence of glutathione. The presence of easA is not required to complete this reaction. Further conversion of agroclavine to paspalic acid is a two-step process involving oxidation of agroclavine to elymoclavine and of elymoclavine to paspalic acid, the second step being performed by the elymoclavine oxidase cloA. Paspalic acid is then further converted to D-lysergic acid. Ergopeptines are assembled from D-lysergic acid and three different amino acids by the D-lysergyl-peptide-synthetases composed each of a monomudular and a trimodular nonribosomal peptide synthetase subunit. LpsB and lpsC encode the monomodular subunits responsible for D-lysergic acid activation and incorporation into the ergopeptine backbone. LpsA1 and A2 subunits encode the trimodular nonribosomal peptide synthetase assembling the tripeptide portion of ergopeptines. LpsA1 is responsible for formation of the major ergopeptine, ergotamine, and lpsA2 for alpha-ergocryptine, the minor ergopeptine of the total alkaloid mixture elaborated by C.purpurea. D-lysergyl-tripeptides are assembled by the nonribosomal peptide synthetases and released as N-(D-lysergyl-aminoacyl)-lactams. Cyclolization of the D-lysergyl-tripeptides is performed by the Fe(2+)/2-ketoglutarate-dependent dioxygenase easH which introduces a hydroxyl group into N-(D-lysergyl-aminoacyl)-lactam at alpha-C of the aminoacyl residue followed by spontaneous condensation with the terminal lactam carbonyl group. This Claviceps purpurea (strain 20.1) (Ergot fungus) protein is Catalase easC.